The following is a 956-amino-acid chain: Translation initiation factor IF-2 (956 aa).

Residues 50–351 form a disordered region; that stretch reads FPADSGGAAN…APSIGGVQVP (302 aa). Pro residues predominate over residues 64 to 95; that stretch reads APKPARAPKPAPKAAPAPPVEEAPAEPAPPAA. 2 stretches are compositionally biased toward low complexity: residues 96–107 and 121–136; these read PEVVAAPEAPVA and PEAP…ARPA. Basic and acidic residues predominate over residues 146–155; it reads AAEKPADTRT. 2 stretches are compositionally biased toward gly residues: residues 171 to 192 and 206 to 234; these read RPGG…GGPR and RPGG…GQGG. Low complexity predominate over residues 235–254; it reads SRPSPGMMPGRSAVGRPGAP. A compositionally biased stretch (gly residues) spans 255-320; sequence ARGGSGGPGG…GTQGAFGRAG (66 aa). Over residues 324 to 333 the composition is skewed to basic residues; that stretch reads VRARKSRRAK. The tr-type G domain occupies 448–619; that stretch reads ARPPVVTVMG…AVLLTADAAL (172 aa). Residues 457–464 form a G1 region; it reads GHVDHGKT. GTP is bound at residue 457–464; that stretch reads GHVDHGKT. Positions 482-486 are G2; that stretch reads GITQH. Positions 507 to 510 are G3; that stretch reads DTPG. GTP is bound by residues 507-511 and 561-564; these read DTPGH and NKVD. A G4 region spans residues 561–564; the sequence is NKVD. The tract at residues 597–599 is G5; it reads SAK.

It belongs to the TRAFAC class translation factor GTPase superfamily. Classic translation factor GTPase family. IF-2 subfamily.

Its subcellular location is the cytoplasm. Its function is as follows. One of the essential components for the initiation of protein synthesis. Protects formylmethionyl-tRNA from spontaneous hydrolysis and promotes its binding to the 30S ribosomal subunits. Also involved in the hydrolysis of GTP during the formation of the 70S ribosomal complex. The chain is Translation initiation factor IF-2 from Beutenbergia cavernae (strain ATCC BAA-8 / DSM 12333 / CCUG 43141 / JCM 11478 / NBRC 16432 / NCIMB 13614 / HKI 0122).